Reading from the N-terminus, the 286-residue chain is Ribose-phosphate pyrophosphokinase (286 aa).

Residues 34–36 (DGE) and 91–93 (RQH) contribute to the ATP site. Mg(2+) contacts are provided by histidine 124 and aspartate 161. The active site involves lysine 184. D-ribose 5-phosphate-binding positions include arginine 186, aspartate 210, and 214–218 (STGGT).

The protein belongs to the ribose-phosphate pyrophosphokinase family. Class III (archaeal) subfamily. In terms of assembly, homodimer. It depends on Mg(2+) as a cofactor.

Its subcellular location is the cytoplasm. It catalyses the reaction D-ribose 5-phosphate + ATP = 5-phospho-alpha-D-ribose 1-diphosphate + AMP + H(+). The protein operates within metabolic intermediate biosynthesis; 5-phospho-alpha-D-ribose 1-diphosphate biosynthesis; 5-phospho-alpha-D-ribose 1-diphosphate from D-ribose 5-phosphate (route I): step 1/1. In terms of biological role, involved in the biosynthesis of the central metabolite phospho-alpha-D-ribosyl-1-pyrophosphate (PRPP) via the transfer of pyrophosphoryl group from ATP to 1-hydroxyl of ribose-5-phosphate (Rib-5-P). The sequence is that of Ribose-phosphate pyrophosphokinase from Thermoplasma volcanium (strain ATCC 51530 / DSM 4299 / JCM 9571 / NBRC 15438 / GSS1).